The primary structure comprises 694 residues: Prolyl 3-hydroxylase 2 (694 aa).

An N-terminal signal peptide occupies residues Met-1–Gly-23. TPR repeat units follow at residues Phe-35 to Leu-68, Arg-136 to His-169, His-196 to Glu-229, and Pro-292 to Asp-325. Residues Lys-386–Thr-418 adopt a coiled-coil conformation. The interval His-395–Glu-427 is disordered. 2 N-linked (GlcNAc...) asparagine glycosylation sites follow: Asn-446 and Asn-535. Positions Thr-543 to Leu-657 constitute a Fe2OG dioxygenase domain. Residues His-566, Asp-568, and His-638 each coordinate Fe cation. The active site involves Arg-648. Positions Lys-691–Leu-694 match the Prevents secretion from ER motif.

Belongs to the leprecan family. Fe cation serves as cofactor. Requires L-ascorbate as cofactor.

The protein resides in the endoplasmic reticulum. It localises to the sarcoplasmic reticulum. The protein localises to the golgi apparatus. It catalyses the reaction L-prolyl-[collagen] + 2-oxoglutarate + O2 = trans-3-hydroxy-L-prolyl-[collagen] + succinate + CO2. In terms of biological role, prolyl 3-hydroxylase that catalyzes the post-translational formation of 3-hydroxyproline on collagens. Contributes to proline 3-hydroxylation of collagen COL4A1 and COL1A1 in tendons, the eye sclera and in the eye lens capsule. Has high activity with the type IV collagen COL4A1, and lower activity with COL1A1. Catalyzes hydroxylation of the first Pro in Gly-Pro-Hyp sequences where Hyp is 4-hydroxyproline. Has no activity on substrates that lack 4-hydroxyproline in the third position. The chain is Prolyl 3-hydroxylase 2 from Gallus gallus (Chicken).